We begin with the raw amino-acid sequence, 130 residues long: Sigma-w pathway protein YsdB (130 aa).

Residues 2–22 (FVMVLRIILLALFAYCIYAVV) form a helical membrane-spanning segment.

It localises to the membrane. In terms of biological role, may mediate a negative feedback loop that down-regulates the expression of the sigma-W regulon following the activation of sigma-W in response to conditions of cell envelope stress. Might interact with and inhibit the activity of the protease PrsW, or could bind to the anti-sigma-W factor RsiW and thereby protect it from PrsW-mediated cleavage. The polypeptide is Sigma-w pathway protein YsdB (ysdB) (Bacillus subtilis (strain 168)).